Here is a 149-residue protein sequence, read N- to C-terminus: MKAVIQRVKEAKVSVEGRVVGEIGQGVLVLLGVEIGDACPQADWMAEKIVNLRIFADSEGKMNLALPEVKGEMLAVSQFTLAGNCSKGRRPSFDTAAAPEEANRLYSYFMGQVWERGVPVQSGIFQADMEVSLVNDGPVTFILETPPKR.

Positions 137–138 (GP) match the Gly-cisPro motif, important for rejection of L-amino acids motif.

Belongs to the DTD family. As to quaternary structure, homodimer.

It localises to the cytoplasm. It carries out the reaction glycyl-tRNA(Ala) + H2O = tRNA(Ala) + glycine + H(+). It catalyses the reaction a D-aminoacyl-tRNA + H2O = a tRNA + a D-alpha-amino acid + H(+). An aminoacyl-tRNA editing enzyme that deacylates mischarged D-aminoacyl-tRNAs. Also deacylates mischarged glycyl-tRNA(Ala), protecting cells against glycine mischarging by AlaRS. Acts via tRNA-based rather than protein-based catalysis; rejects L-amino acids rather than detecting D-amino acids in the active site. By recycling D-aminoacyl-tRNA to D-amino acids and free tRNA molecules, this enzyme counteracts the toxicity associated with the formation of D-aminoacyl-tRNA entities in vivo and helps enforce protein L-homochirality. The protein is D-aminoacyl-tRNA deacylase of Geobacter sp. (strain M21).